A 616-amino-acid polypeptide reads, in one-letter code: MALLQISEPGLSAAPHQRRLAVGIDLGTTNSLVATVRSGQAETLADAEGRHLLPSVVHYQQQGHSVGYDARTNAAKDPANTISSVKRMMGRSLVDIQQRYPHLPYQLQASENGLPMIATDAGLLNPIRVSADILKALAARATATLEGDLDGVVITVPAYFDDAQRQGTKDAARLAGLHVLRLLNEPTAAAIAYGLDSGQEGVIAVYDLGGGTFDISILRLSRGVFEVLATGGDSALGGDDFDHLLADYIREQAGIADRRDVRVQRELLDAAIDAKIALSDAQAVTVNVAGWQGEITRDQFNELIAALVKRTLLACRRALKDADVEASEVLEVVMVGGSTRVPLVRERVGEFFGRTPLTSIDPDKVVAIGAAIQADILVGNKPDSEMLLLDVIPLSLGLETMGGLVEKVIPRNTTIPVARAQEFTTFKDGQTAMSIHVMQGERELVQDCRSLARFALRGIPALPAGGAHIRVTFQVDADGLLNVTAMEKSTGVESSIQVKPSYGLTDSEIATMIQDSMSYAEQDVKARMLAEQKVEAARVLESLEGALTADAALLSAAERQVIDEATAHLRIVAAENDADAIEQAIKNVDKETQDFAARRMDKSVRVALKGQSVDEV.

This sequence belongs to the heat shock protein 70 family.

Chaperone involved in the maturation of iron-sulfur cluster-containing proteins. Has a low intrinsic ATPase activity which is markedly stimulated by HscB. Involved in the maturation of IscU. In Enterobacter sp. (strain 638), this protein is Chaperone protein HscA.